Consider the following 393-residue polypeptide: Seven-bladed beta-propeller protein Rv1057 (393 aa).

The tract at residues 208-230 (DGGRIGSRSRSRQKSSKPRGNQA) is disordered. The segment covering 214 to 224 (SRSRSRQKSSK) has biased composition (basic residues).

Functionally, may play an important role in host-pathogen interactions and in ESAT-6 secretion. The protein is Seven-bladed beta-propeller protein Rv1057 of Mycobacterium tuberculosis (strain ATCC 25618 / H37Rv).